The sequence spans 436 residues: 3-ketoacyl-CoA thiolase (436 aa).

Cys-99 functions as the Acyl-thioester intermediate in the catalytic mechanism. Catalysis depends on proton acceptor residues His-392 and Cys-422.

The protein belongs to the thiolase-like superfamily. Thiolase family. As to quaternary structure, heterotetramer of two alpha chains (FadJ) and two beta chains (FadI).

The protein resides in the cytoplasm. It carries out the reaction an acyl-CoA + acetyl-CoA = a 3-oxoacyl-CoA + CoA. Its pathway is lipid metabolism; fatty acid beta-oxidation. Its function is as follows. Catalyzes the final step of fatty acid oxidation in which acetyl-CoA is released and the CoA ester of a fatty acid two carbons shorter is formed. The polypeptide is 3-ketoacyl-CoA thiolase (Shewanella frigidimarina (strain NCIMB 400)).